The sequence spans 169 residues: MEVYIPSFRHEDSDLERGYTVFKIEVLMNGRKHFVEKRYSEFHALHKKLKKCIKTPEIPSKHVRNWVPKVLEQRRQGLETYLQAVILENEELPKLFLDFLNVRHLPSLPKAESCGSFDETESEESSKLSHQPVLLFLGDPYVLPAASDFPNVVIEGVLHGIFFSHLQPR.

Methionine 1 bears the N-acetylmethionine mark. A PX domain is found at 1-125; the sequence is MEVYIPSFRH…SFDETESEES (125 aa). A 1,2-diacyl-sn-glycero-3-phospho-(1D-myo-inositol-3-phosphate)-binding residues include arginine 38, serine 40, lysine 61, and arginine 74. A phosphoserine mark is found at serine 113 and serine 116.

The protein belongs to the sorting nexin family.

It localises to the cytoplasmic vesicle membrane. Functionally, may be involved in several stages of intracellular trafficking. The sequence is that of Sorting nexin-24 (Snx24) from Rattus norvegicus (Rat).